The following is a 446-amino-acid chain: Hepatocyte nuclear factor 4-beta (446 aa).

Residues N47–N122 constitute a DNA-binding region (nuclear receptor). 2 NR C4-type zinc fingers span residues C50 to C70 and C86 to C110. Residues N137 to G366 enclose the NR LBD domain.

The protein belongs to the nuclear hormone receptor family. NR2 subfamily. Homodimerization is required for HNF4-alpha to bind to its recognition site. Expressed in liver, kidney, stomach, intestine, lung, ovary, and testis. Not expressed in fat, muscle and brain.

The protein localises to the nucleus. Transcription factor; binds and activates the promoter for the HNF1-alpha gene. Seems to have a lower DNA binding activity than HNF4-alpha and is a weaker transactivator than the alpha isoform. This is Hepatocyte nuclear factor 4-beta (hnf4b) from Xenopus laevis (African clawed frog).